The sequence spans 354 residues: 3-dehydroquinate synthase (354 aa).

Residues 69-74 (DGEAEK), 103-107 (GVIGD), 127-128 (TS), Lys-140, and Lys-149 each bind NAD(+). Residues Glu-182, His-245, and His-262 each contribute to the Zn(2+) site.

The protein belongs to the sugar phosphate cyclases superfamily. Dehydroquinate synthase family. Co(2+) serves as cofactor. Zn(2+) is required as a cofactor. The cofactor is NAD(+).

The protein resides in the cytoplasm. The catalysed reaction is 7-phospho-2-dehydro-3-deoxy-D-arabino-heptonate = 3-dehydroquinate + phosphate. The protein operates within metabolic intermediate biosynthesis; chorismate biosynthesis; chorismate from D-erythrose 4-phosphate and phosphoenolpyruvate: step 2/7. Catalyzes the conversion of 3-deoxy-D-arabino-heptulosonate 7-phosphate (DAHP) to dehydroquinate (DHQ). The chain is 3-dehydroquinate synthase from Colwellia psychrerythraea (strain 34H / ATCC BAA-681) (Vibrio psychroerythus).